Consider the following 128-residue polypeptide: Ribonuclease P protein component 4 (128 aa).

Zn(2+)-binding residues include C67, C70, C96, and C99.

This sequence belongs to the eukaryotic/archaeal RNase P protein component 4 family. As to quaternary structure, consists of a catalytic RNA component and at least 4-5 protein subunits. Zn(2+) is required as a cofactor.

Its subcellular location is the cytoplasm. It catalyses the reaction Endonucleolytic cleavage of RNA, removing 5'-extranucleotides from tRNA precursor.. Part of ribonuclease P, a protein complex that generates mature tRNA molecules by cleaving their 5'-ends. This Methanopyrus kandleri (strain AV19 / DSM 6324 / JCM 9639 / NBRC 100938) protein is Ribonuclease P protein component 4.